Here is a 343-residue protein sequence, read N- to C-terminus: Cytosolic Fe-S cluster assembly factor CFD1 (343 aa).

15 to 22 (GKGGVGKS) lines the ATP pocket. 2 stretches are compositionally biased toward polar residues: residues 80 to 91 (PSSDGLNGSQRA) and 99 to 110 (ESSSSTVETAPQ). The disordered stretch occupies residues 80–110 (PSSDGLNGSQRANKPDDSNESSSSTVETAPQ). Residues cysteine 241 and cysteine 244 each contribute to the [4Fe-4S] cluster site.

Belongs to the Mrp/NBP35 ATP-binding proteins family. NUBP2/CFD1 subfamily. In terms of assembly, heterotetramer of 2 NBP35 and 2 CFD1 chains. [4Fe-4S] cluster is required as a cofactor.

It localises to the cytoplasm. Its function is as follows. Component of the cytosolic iron-sulfur (Fe/S) protein assembly (CIA) machinery. Required for maturation of extramitochondrial Fe-S proteins. The NBP35-CFD1 heterotetramer forms a Fe-S scaffold complex, mediating the de novo assembly of an Fe-S cluster and its transfer to target apoproteins. This Coccidioides immitis (strain RS) (Valley fever fungus) protein is Cytosolic Fe-S cluster assembly factor CFD1.